An 893-amino-acid polypeptide reads, in one-letter code: Beta-adaptin-like protein C (893 aa).

The segment at 593–621 (TEDEDYVEGSETGYPEASGNPVDGAASPS) is disordered.

It belongs to the adaptor complexes large subunit family. As to quaternary structure, adaptor protein complexes are heterotetramers composed of two large adaptins (beta-type subunit and alpha-type or delta-type or epsilon-type or gamma-type subunit), a medium adaptin (mu-type subunit) and a small adaptin (sigma-type subunit).

Its subcellular location is the golgi apparatus. The protein localises to the trans-Golgi network. It is found in the cytoplasmic vesicle. The protein resides in the clathrin-coated vesicle membrane. Subunit of clathrin-associated adaptor protein complex that plays a role in protein sorting in the late-Golgi/trans-Golgi network (TGN) and/or endosomes. The AP complexes mediate both the recruitment of clathrin to membranes and the recognition of sorting signals within the cytosolic tails of transmembrane cargo molecules. The chain is Beta-adaptin-like protein C (BETAC-AD) from Arabidopsis thaliana (Mouse-ear cress).